A 327-amino-acid polypeptide reads, in one-letter code: Undecaprenyl-phosphate 4-deoxy-4-formamido-L-arabinose transferase (327 aa).

Transmembrane regions (helical) follow at residues 236–256 (LSLVGSVIALSGFTLAVLLVV) and 270–290 (VFTLFAVLFMFIGAQFVGMGL).

Belongs to the glycosyltransferase 2 family.

Its subcellular location is the cell inner membrane. It catalyses the reaction UDP-4-deoxy-4-formamido-beta-L-arabinose + di-trans,octa-cis-undecaprenyl phosphate = 4-deoxy-4-formamido-alpha-L-arabinopyranosyl di-trans,octa-cis-undecaprenyl phosphate + UDP. The protein operates within glycolipid biosynthesis; 4-amino-4-deoxy-alpha-L-arabinose undecaprenyl phosphate biosynthesis; 4-amino-4-deoxy-alpha-L-arabinose undecaprenyl phosphate from UDP-4-deoxy-4-formamido-beta-L-arabinose and undecaprenyl phosphate: step 1/2. It functions in the pathway bacterial outer membrane biogenesis; lipopolysaccharide biosynthesis. In terms of biological role, catalyzes the transfer of 4-deoxy-4-formamido-L-arabinose from UDP to undecaprenyl phosphate. The modified arabinose is attached to lipid A and is required for resistance to polymyxin and cationic antimicrobial peptides. This chain is Undecaprenyl-phosphate 4-deoxy-4-formamido-L-arabinose transferase, found in Yersinia enterocolitica serotype O:8 / biotype 1B (strain NCTC 13174 / 8081).